Here is a 152-residue protein sequence, read N- to C-terminus: Transcriptional repressor NrdR (152 aa).

A zinc finger spans residues 3-34; it reads CPFCHNEQSRVIDSRVIDSGTSIRRRRECAAC. Positions 46–136 constitute an ATP-cone domain; sequence LSVVKRNGLA…VYKSFESADD (91 aa).

The protein belongs to the NrdR family. Zn(2+) serves as cofactor.

Its function is as follows. Negatively regulates transcription of bacterial ribonucleotide reductase nrd genes and operons by binding to NrdR-boxes. The sequence is that of Transcriptional repressor NrdR from Corynebacterium aurimucosum (strain ATCC 700975 / DSM 44827 / CIP 107346 / CN-1) (Corynebacterium nigricans).